The primary structure comprises 289 residues: CCR4-associated factor 16 (289 aa).

The ABC transporter domain maps to 7 to 249; that stretch reads IEVRNLTYKF…SEVVNAKVNG (243 aa). 41 to 48 lines the ATP pocket; that stretch reads GANGAGKS.

The protein belongs to the ABC transporter superfamily. Interacts with CCR4 and SSN2.

It is found in the cytoplasm. The protein resides in the nucleus. The polypeptide is CCR4-associated factor 16 (CAF16) (Saccharomyces cerevisiae (strain ATCC 204508 / S288c) (Baker's yeast)).